A 303-amino-acid polypeptide reads, in one-letter code: Phenoloxidase-activating factor 2 (303 aa).

Residues proline 1–cysteine 24 are disordered. Positions isoleucine 36–alanine 292 constitute a Peptidase S1 domain. 3 disulfide bridges follow: cysteine 173–cysteine 247, cysteine 206–cysteine 227, and cysteine 237–cysteine 268.

Belongs to the peptidase S1 family. Heterodimer.

The protein resides in the secreted. Functionally, binds and activates processed prophenoloxidases PPO1 and PPO2 and thus is involved in the activation of the prophenoloxidase cascade probably following the recognition of pathogen-derived products. Binds the A.niger cell wall component alpha-1,3-glucan, a fungal pathogen-associated molecular pattern (PAMP) that activates the host immune response. This chain is Phenoloxidase-activating factor 2 (LOC113510063), found in Galleria mellonella (Greater wax moth).